The following is a 174-amino-acid chain: UPF0398 protein LACR_0544 (174 aa).

This sequence belongs to the UPF0398 family.

This is UPF0398 protein LACR_0544 from Lactococcus lactis subsp. cremoris (strain SK11).